Consider the following 1192-residue polypeptide: Homeodomain-interacting protein kinase 3 (1192 aa).

Residue K27 forms a Glycyl lysine isopeptide (Lys-Gly) (interchain with G-Cter in SUMO); alternate linkage. K27 is covalently cross-linked (Glycyl lysine isopeptide (Lys-Gly) (interchain with G-Cter in SUMO2); alternate). Residues 197–525 (YEVLDFLGRG…PIETLNHPFV (329 aa)) enclose the Protein kinase domain. ATP-binding positions include 203–211 (LGRGTFGQV) and K226. The active-site Proton acceptor is D322. The residue at position 359 (Y359) is a Phosphotyrosine. Residues 767 to 921 (QNRSNSLQNT…NSMSDDEQES (155 aa)) form an interaction with AR region. Residues 775 to 868 (NTNIPHSAFI…SPRPSLRECK (94 aa)) are interaction with FAS. A disordered region spans residues 799–829 (CVDTQDNHTSEGEAGTCREASVRQDSSVSDK). The tract at residues 832–988 (QTIIIADSPS…ESGLSVDEHM (157 aa)) is required for localization to nuclear speckles. An SUMO interaction motifs (SIM); required for nuclear localization and kinase activity region spans residues 843–895 (AVSVITISSDSDDEETSPRPSLRECKGSLDCEACQSTLNIDRMCSLSSPDSTL). Positions 847-857 (ITISSDSDDEE) are interaction with UBL1. Residues 889–906 (SSPDSTLSTSSSGQSSPS) are compositionally biased toward low complexity. Disordered stretches follow at residues 889–943 (SSPD…PFAE) and 956–1023 (LGTC…KPAA). Residue K1185 forms a Glycyl lysine isopeptide (Lys-Gly) (interchain with G-Cter in SUMO) linkage.

It belongs to the protein kinase superfamily. CMGC Ser/Thr protein kinase family. HIPK subfamily. In terms of assembly, interacts with UBL1/SUMO-1. Interacts with and stabilizes ligand-bound androgen receptor (AR). Interacts with Nkx1-2. Interacts with FAS and DAXX. Probably part of a complex consisting of HIPK3, FAS and FADD. Binds to NR5A1/SF1, SPEN/MINT and RUNX2. In terms of processing, autophosphorylated, but autophosphorylation is not required for catalytic activity. Post-translationally, may be sumoylated. In terms of tissue distribution, heart, skeletal muscle, spleen, testis and lung.

It is found in the cytoplasm. The protein localises to the nucleus. It carries out the reaction L-seryl-[protein] + ATP = O-phospho-L-seryl-[protein] + ADP + H(+). The enzyme catalyses L-threonyl-[protein] + ATP = O-phospho-L-threonyl-[protein] + ADP + H(+). In terms of biological role, serine/threonine-protein kinase involved in transcription regulation, apoptosis and steroidogenic gene expression. Phosphorylates JUN and RUNX2. Seems to negatively regulate apoptosis by promoting FADD phosphorylation. Enhances androgen receptor-mediated transcription. May act as a transcriptional corepressor for NK homeodomain transcription factors. The phosphorylation of NR5A1 activates SF1 leading to increased steroidogenic gene expression upon cAMP signaling pathway stimulation. In osteoblasts, supports transcription activation: phosphorylates RUNX2 that synergizes with SPEN/MINT to enhance FGFR2-mediated activation of the osteocalcin FGF-responsive element (OCFRE). The sequence is that of Homeodomain-interacting protein kinase 3 (Hipk3) from Mus musculus (Mouse).